A 368-amino-acid polypeptide reads, in one-letter code: Ribosomal RNA large subunit methyltransferase M (368 aa).

S-adenosyl-L-methionine contacts are provided by residues Ser199, 232–235 (APGG), Asp251, Asp271, and Asp287. The active-site Proton acceptor is Lys316.

This sequence belongs to the class I-like SAM-binding methyltransferase superfamily. RNA methyltransferase RlmE family. RlmM subfamily. In terms of assembly, monomer.

Its subcellular location is the cytoplasm. The catalysed reaction is cytidine(2498) in 23S rRNA + S-adenosyl-L-methionine = 2'-O-methylcytidine(2498) in 23S rRNA + S-adenosyl-L-homocysteine + H(+). Its function is as follows. Catalyzes the 2'-O-methylation at nucleotide C2498 in 23S rRNA. The sequence is that of Ribosomal RNA large subunit methyltransferase M from Aromatoleum aromaticum (strain DSM 19018 / LMG 30748 / EbN1) (Azoarcus sp. (strain EbN1)).